The primary structure comprises 224 residues: Large ribosomal subunit protein uL3 (224 aa).

An N5-methylglutamine modification is found at glutamine 159.

Belongs to the universal ribosomal protein uL3 family. In terms of assembly, part of the 50S ribosomal subunit. Forms a cluster with proteins L14 and L19. Methylated by PrmB.

Functionally, one of the primary rRNA binding proteins, it binds directly near the 3'-end of the 23S rRNA, where it nucleates assembly of the 50S subunit. This chain is Large ribosomal subunit protein uL3, found in Janthinobacterium sp. (strain Marseille) (Minibacterium massiliensis).